A 288-amino-acid polypeptide reads, in one-letter code: Acetyl-coenzyme A carboxylase carboxyl transferase subunit beta (288 aa).

In terms of domain architecture, CoA carboxyltransferase N-terminal spans 34 to 288 (LFAKCPGCKQ…TLLSFHGGVQ (255 aa)). Zn(2+) is bound by residues Cys38, Cys41, Cys56, and Cys59. The C4-type zinc-finger motif lies at 38–59 (CPGCKQAIYQKDLGQAKICPNC).

This sequence belongs to the AccD/PCCB family. As to quaternary structure, acetyl-CoA carboxylase is a heterohexamer composed of biotin carboxyl carrier protein (AccB), biotin carboxylase (AccC) and two subunits each of ACCase subunit alpha (AccA) and ACCase subunit beta (AccD). Zn(2+) is required as a cofactor.

It is found in the cytoplasm. The enzyme catalyses N(6)-carboxybiotinyl-L-lysyl-[protein] + acetyl-CoA = N(6)-biotinyl-L-lysyl-[protein] + malonyl-CoA. It participates in lipid metabolism; malonyl-CoA biosynthesis; malonyl-CoA from acetyl-CoA: step 1/1. Component of the acetyl coenzyme A carboxylase (ACC) complex. Biotin carboxylase (BC) catalyzes the carboxylation of biotin on its carrier protein (BCCP) and then the CO(2) group is transferred by the transcarboxylase to acetyl-CoA to form malonyl-CoA. The sequence is that of Acetyl-coenzyme A carboxylase carboxyl transferase subunit beta from Streptococcus thermophilus (strain ATCC BAA-491 / LMD-9).